A 423-amino-acid polypeptide reads, in one-letter code: Kynureninase (423 aa).

Pyridoxal 5'-phosphate-binding positions include leucine 105, serine 106, 133–136, aspartate 218, histidine 221, and tyrosine 243; that span reads FPSD. Lysine 244 bears the N6-(pyridoxal phosphate)lysine mark. Positions 273 and 301 each coordinate pyridoxal 5'-phosphate.

Belongs to the kynureninase family. In terms of assembly, homodimer. Pyridoxal 5'-phosphate serves as cofactor.

The catalysed reaction is L-kynurenine + H2O = anthranilate + L-alanine + H(+). It carries out the reaction 3-hydroxy-L-kynurenine + H2O = 3-hydroxyanthranilate + L-alanine + H(+). The protein operates within amino-acid degradation; L-kynurenine degradation; L-alanine and anthranilate from L-kynurenine: step 1/1. Its pathway is cofactor biosynthesis; NAD(+) biosynthesis; quinolinate from L-kynurenine: step 2/3. In terms of biological role, catalyzes the cleavage of L-kynurenine (L-Kyn) and L-3-hydroxykynurenine (L-3OHKyn) into anthranilic acid (AA) and 3-hydroxyanthranilic acid (3-OHAA), respectively. The sequence is that of Kynureninase from Xanthomonas oryzae pv. oryzae (strain MAFF 311018).